Consider the following 432-residue polypeptide: Adenylosuccinate synthetase (432 aa).

Residues G13–K19 and G41–T43 each bind GTP. Catalysis depends on D14, which acts as the Proton acceptor. D14 and G41 together coordinate Mg(2+). IMP is bound by residues D14–K17, N39–H42, T130, R144, Q225, T240, and R304. H42 (proton donor) is an active-site residue. Position 300 to 306 (A300 to R306) interacts with substrate. GTP-binding positions include R306, K332–D334, and S415–G417.

The protein belongs to the adenylosuccinate synthetase family. Homodimer. Mg(2+) serves as cofactor.

It localises to the cytoplasm. The catalysed reaction is IMP + L-aspartate + GTP = N(6)-(1,2-dicarboxyethyl)-AMP + GDP + phosphate + 2 H(+). Its pathway is purine metabolism; AMP biosynthesis via de novo pathway; AMP from IMP: step 1/2. Functionally, plays an important role in the de novo pathway of purine nucleotide biosynthesis. Catalyzes the first committed step in the biosynthesis of AMP from IMP. The sequence is that of Adenylosuccinate synthetase from Salmonella choleraesuis (strain SC-B67).